Reading from the N-terminus, the 1364-residue chain is DNA-directed RNA polymerase subunit beta' (1364 aa).

Residues Cys250, Cys317, Cys324, and Cys327 each contribute to the Zn(2+) site. A disordered region spans residues 1318–1342 (TRHNIDPSASTNAAFTRPDVDNELK).

It belongs to the RNA polymerase beta' chain family. RpoC2 subfamily. In cyanobacteria the RNAP catalytic core is composed of 2 alpha, 1 beta, 1 beta', 1 gamma and 1 omega subunit. When a sigma factor is associated with the core the holoenzyme is formed, which can initiate transcription. Requires Zn(2+) as cofactor.

The enzyme catalyses RNA(n) + a ribonucleoside 5'-triphosphate = RNA(n+1) + diphosphate. Its function is as follows. DNA-dependent RNA polymerase catalyzes the transcription of DNA into RNA using the four ribonucleoside triphosphates as substrates. This chain is DNA-directed RNA polymerase subunit beta', found in Synechococcus sp. (strain CC9902).